A 662-amino-acid chain; its full sequence is Probable conjugal transfer protein TrbE part 2 (662 aa).

307-314 (GPTGSGKS) is an ATP binding site.

The protein belongs to the TrbE/VirB4 family.

The chain is Probable conjugal transfer protein TrbE part 2 (trbEB) from Sinorhizobium fredii (strain NBRC 101917 / NGR234).